The sequence spans 378 residues: 3-dehydroquinate synthase (378 aa).

NAD(+) is bound by residues 115–119, 139–140, lysine 152, and lysine 161; these read GVVGD and TS. Residues glutamate 194, histidine 256, and histidine 275 each contribute to the Zn(2+) site.

The protein belongs to the sugar phosphate cyclases superfamily. Dehydroquinate synthase family. The cofactor is Co(2+). Zn(2+) serves as cofactor. It depends on NAD(+) as a cofactor.

It is found in the cytoplasm. It carries out the reaction 7-phospho-2-dehydro-3-deoxy-D-arabino-heptonate = 3-dehydroquinate + phosphate. It participates in metabolic intermediate biosynthesis; chorismate biosynthesis; chorismate from D-erythrose 4-phosphate and phosphoenolpyruvate: step 2/7. Catalyzes the conversion of 3-deoxy-D-arabino-heptulosonate 7-phosphate (DAHP) to dehydroquinate (DHQ). The sequence is that of 3-dehydroquinate synthase from Brucella anthropi (strain ATCC 49188 / DSM 6882 / CCUG 24695 / JCM 21032 / LMG 3331 / NBRC 15819 / NCTC 12168 / Alc 37) (Ochrobactrum anthropi).